A 182-amino-acid polypeptide reads, in one-letter code: FMN reductase (NADH) RutF (182 aa).

The protein belongs to the non-flavoprotein flavin reductase family. RutF subfamily.

It carries out the reaction FMNH2 + NAD(+) = FMN + NADH + 2 H(+). Functionally, catalyzes the reduction of FMN to FMNH2 which is used to reduce pyrimidine by RutA via the Rut pathway. This chain is FMN reductase (NADH) RutF, found in Yersinia enterocolitica serotype O:8 / biotype 1B (strain NCTC 13174 / 8081).